The sequence spans 111 residues: Iron-sulfur cluster assembly protein CyaY (111 aa).

It belongs to the frataxin family.

Involved in iron-sulfur (Fe-S) cluster assembly. May act as a regulator of Fe-S biogenesis. The chain is Iron-sulfur cluster assembly protein CyaY from Cupriavidus pinatubonensis (strain JMP 134 / LMG 1197) (Cupriavidus necator (strain JMP 134)).